We begin with the raw amino-acid sequence, 269 residues long: GATA transcription factor 3 (269 aa).

A Nuclear localization signal motif is present at residues K136–R143. The segment at L176–N230 adopts a GATA-type zinc-finger fold. A disordered region spans residues K245 to W269.

The protein belongs to the type IV zinc-finger family. Class A subfamily. In terms of tissue distribution, mostly expressed in roots. Also expressed in stems, flowers and leaves.

The protein resides in the nucleus. In terms of biological role, transcriptional activator that specifically binds 5'-GATA-3' or 5'-GAT-3' motifs within gene promoters. May be involved in the regulation of some light-responsive genes. This is GATA transcription factor 3 (GATA3) from Arabidopsis thaliana (Mouse-ear cress).